We begin with the raw amino-acid sequence, 146 residues long: SecB-like chaperone SmegB (146 aa).

It belongs to the SecB-like family.

Chaperone component of an orphan antitoxin chaperone (AC) system; there is no toxin gene in close genomic proximity. When expressed in E.coli complements the cold-sensitive phenotype of a secB deletion, suggesting it may have a generic chaperone function. Does not however complement the toxin-neutralizing effect of its M.tuberculosis paralog Rv1957 (AC P95257) in E.coli, probably because the antitoxin genes are not from the same family. In Mycolicibacterium smegmatis (strain ATCC 700084 / mc(2)155) (Mycobacterium smegmatis), this protein is SecB-like chaperone SmegB.